Here is a 777-residue protein sequence, read N- to C-terminus: Nuclear autoantigenic sperm protein (777 aa).

A2 carries the N-acetylalanine modification. K34 is subject to N6-acetyllysine. The stretch at 44–77 (AKKLLGLGQKHLVMGDIPAAVNAFQEAASLLGKK) is one TPR 1 repeat. A histone-binding region spans residues 117–128 (EEEEGEKTEEES). The residue at position 124 (T124) is a Phosphothreonine. S128 carries the phosphoserine modification. 3 stretches are compositionally biased toward basic and acidic residues: residues 152–186 (MGEKEAQKTEDKSLVKPEMDKEQETEMEKGGREDM), 227–259 (VTSKKPDQEIPGAEEGKSVSETDVQEECREKGG), and 267–276 (IEEKPKEASK). Residues 152–496 (MGEKEAQKTE…ALENKSLQEN (345 aa)) form a disordered region. Positions 211-244 (EEGKGAAAPEGLSEAEVTSKKPDQEIPGAEEGKS) are histone-binding. The residue at position 243 (K243) is an N6-acetyllysine. A Phosphoserine modification is found at S244. K285 carries the N6-acetyllysine modification. The segment covering 303–319 (DEPKEQVAASESERGKA) has biased composition (basic and acidic residues). The residue at position 312 (S312) is a Phosphoserine. Positions 342–353 (AADASAAEAGSE) are enriched in low complexity. Phosphoserine is present on residues S399, S411, and S440. Positions 458 to 501 (EQMKEGEETEGSEEEDKENDKAEETLNDSALENKSLQENEEEEI) are histone-binding. Positions 464-474 (EETEGSEEEDK) are enriched in acidic residues. T466 bears the Phosphothreonine mark. A phosphoserine mark is found at S469, S486, and S492. Residues 484–493 (NDSALENKSL) are compositionally biased toward polar residues. TPR repeat units follow at residues 531 to 564 (AQAHLKLGEVSVESENYLQAVEEFQACLNLQEQY) and 573 to 606 (AETHYQLGLAYGYNSQYDEAVAQFSKSIEVIEKR). Positions 593–648 (VAQFSKSIEVIEKRMAVLNEQMKEAEGSPTEYEKEIEELKELLPEIREKIEDAKES) form a coiled coil. S651 carries the post-translational modification Phosphoserine. A compositionally biased stretch (low complexity) spans 667–681 (STSGFTPSGGSSSVS). The disordered stretch occupies residues 667 to 777 (STSGFTPSGG…AGATVESTAC (111 aa)). T672 is subject to Phosphothreonine. Residues S694 and S695 each carry the phosphoserine modification. The short motif at 705-711 (VRKKRKP) is the Nuclear localization signal element. The segment covering 710–728 (KPEEESPRKDDAKKAKQEP) has biased composition (basic and acidic residues). Phosphoserine is present on S715. Residue K725 forms a Glycyl lysine isopeptide (Lys-Gly) (interchain with G-Cter in SUMO1) linkage. Phosphoserine is present on S734.

Belongs to the NASP family. Binds to linker H1 histones. Interacts with histones H2A, H2B, H3 and H4. Interacts with histone H3.3. Interacts with histones H3 and H4; NASP is a histone chaperone that stabilizes and maintains a soluble pool of histone H3-H4 dimers. Interacts with ASF1A and ASF1B; the interaction is probably indirect and mediated by H3-H4. Also binds to HSP90 in the cytoplasm. This interaction stimulates binding of NASP to H1-6/H1T.

The protein resides in the cytoplasm. The protein localises to the nucleus. In terms of biological role, component of the histone chaperone network. Binds and stabilizes histone H3-H4 not bound to chromatin to maintain a soluble reservoir and modulate degradation by chaperone-mediated autophagy. Required for DNA replication, normal cell cycle progression and cell proliferation. Forms a cytoplasmic complex with HSP90 and H1 linker histones and stimulates HSP90 ATPase activity. NASP and H1 histone are subsequently released from the complex and translocate to the nucleus where the histone is released for binding to DNA. The protein is Nuclear autoantigenic sperm protein of Bos taurus (Bovine).